The sequence spans 191 residues: NAD(P)H dehydrogenase (quinone) (191 aa).

Residues I4 to A184 form the Flavodoxin-like domain. FMN is bound by residues S10–T15, T83–F85, and S118–G124.

Belongs to the WrbA family. In terms of assembly, homodimer and homotetramer; in equilibrium. FMN serves as cofactor.

The enzyme catalyses a quinone + NADH + H(+) = a quinol + NAD(+). It carries out the reaction a quinone + NADPH + H(+) = a quinol + NADP(+). Functionally, it seems to function in response to environmental stress when various electron transfer chains are affected or when the environment is highly oxidizing. It reduces quinones to the hydroquinone state to prevent interaction of the semiquinone with O2 and production of superoxide. It prefers NADH over NADPH. The sequence is that of NAD(P)H dehydrogenase (quinone) from Archaeoglobus fulgidus (strain ATCC 49558 / DSM 4304 / JCM 9628 / NBRC 100126 / VC-16).